The sequence spans 664 residues: DNA primase (664 aa).

The segment at 40-64 (CPFHKEKTPSFTVSPDKQFYYCFGC) adopts a CHC2-type zinc-finger fold. Over residues 94-104 (GMDVPREERGG) the composition is skewed to basic and acidic residues. The disordered stretch occupies residues 94 to 115 (GMDVPREERGGRGHTPRQPTDS). The region spanning 262–344 (DEIMVVEGYM…GKRVRFLFLP (83 aa)) is the Toprim domain. E268, D312, and D314 together coordinate Mg(2+). Residues 483–521 (PRKSWNKDKKPWDGKKWDGKKKWDKGGRGDFKAPQRTPV) are disordered. The segment covering 487-515 (WNKDKKPWDGKKWDGKKKWDKGGRGDFKA) has biased composition (basic and acidic residues).

This sequence belongs to the DnaG primase family. As to quaternary structure, monomer. Interacts with DnaB. The cofactor is Zn(2+). Mg(2+) serves as cofactor.

It catalyses the reaction ssDNA + n NTP = ssDNA/pppN(pN)n-1 hybrid + (n-1) diphosphate.. Its function is as follows. RNA polymerase that catalyzes the synthesis of short RNA molecules used as primers for DNA polymerase during DNA replication. In Pseudomonas aeruginosa (strain ATCC 15692 / DSM 22644 / CIP 104116 / JCM 14847 / LMG 12228 / 1C / PRS 101 / PAO1), this protein is DNA primase.